A 414-amino-acid chain; its full sequence is Isocitrate dehydrogenase [NADP] cytoplasmic (414 aa).

Ser2 carries the N-acetylserine modification. Position 42 is a phosphotyrosine (Tyr42). 75–77 (TIT) is a binding site for NADP(+). Position 77 (Thr77) interacts with substrate. N6-acetyllysine is present on Lys81. Arg82 serves as a coordination point for NADP(+). Residues 94–100 (SPNGTIR) and Arg109 each bind substrate. Lys126 bears the N6-succinyllysine mark. Positions 132 and 212 each coordinate substrate. N6-acetyllysine occurs at positions 224, 233, and 243. Asp252 provides a ligand contact to Mn(2+). Lys260 serves as a coordination point for NADP(+). Positions 275 and 279 each coordinate Mn(2+). 310-315 (GTVTRH) contacts NADP(+). Lys321 is modified (N6-acetyllysine). Residue Asn328 coordinates NADP(+). Ser389 carries the post-translational modification Phosphoserine. Lys400 is modified (N6-succinyllysine).

This sequence belongs to the isocitrate and isopropylmalate dehydrogenases family. As to quaternary structure, homodimer. Mg(2+) serves as cofactor. It depends on Mn(2+) as a cofactor. Post-translationally, the N-terminus is blocked. Acetylation at Lys-374 dramatically reduces catalytic activity. In terms of tissue distribution, ubiquitous.

It localises to the cytoplasm. It is found in the cytosol. The protein resides in the peroxisome. The enzyme catalyses D-threo-isocitrate + NADP(+) = 2-oxoglutarate + CO2 + NADPH. Catalyzes the NADP(+)-dependent oxidative decarboxylation of isocitrate (D-threo-isocitrate) to 2-ketoglutarate (2-oxoglutarate), which is required by other enzymes such as the phytanoyl-CoA dioxygenase. Plays a critical role in the generation of NADPH, an important cofactor in many biosynthesis pathways. May act as a corneal epithelial crystallin and may be involved in maintaining corneal epithelial transparency. The protein is Isocitrate dehydrogenase [NADP] cytoplasmic (Idh1) of Rattus norvegicus (Rat).